Reading from the N-terminus, the 153-residue chain is MNKYWIRTSMVFLILSILAACGSDDTNLTLVTDEREDLVREFVTEYKETMVEAYNTGNFNELEPFLITNNSFYHSLRRYVSDSHSEGNTKELLDFQVHQVFEDPEGDLYVDATERVEVIEHGQAIEVERDVRFELTKGGADSFRIVTIRHVKS.

This is an uncharacterized protein from Alkalihalophilus pseudofirmus (strain ATCC BAA-2126 / JCM 17055 / OF4) (Bacillus pseudofirmus).